Reading from the N-terminus, the 66-residue chain is Large ribosomal subunit protein bL35 (66 aa).

This sequence belongs to the bacterial ribosomal protein bL35 family.

The chain is Large ribosomal subunit protein bL35 from Leptospira biflexa serovar Patoc (strain Patoc 1 / Ames).